The chain runs to 623 residues: uncharacterized protein (623 aa).

5 helical membrane passes run 242–262 (IVLA…ITWL), 288–308 (IVSP…LDIF), 318–338 (VSMW…IALF), 361–381 (VINL…LLGV), and 387–407 (FNVS…ALAV).

The protein belongs to the MscS (TC 1.A.23) family.

The protein resides in the cell membrane. This is an uncharacterized protein from Helicobacter pylori (strain ATCC 700392 / 26695) (Campylobacter pylori).